Consider the following 881-residue polypeptide: MAKNTDIEHDAHEPAGHGDVRESAVENPSASAVSDGEERATFAPEVAPQTDTESAQGAAQESEPEVQRAGEAEKGVPEKAKAVVPLDELLPQKVHLIPLTGRPIYPGIFTPLLISDEDDVRSVESAYSDSGFIGLCLVKTDTQNPTISDLYEVGSVARIVKKINLPDGGLNVFISTQKRFRIRKHVHHSKPIVAAVQYLSDLIEGDPLEIKALVRGLIGEMKELSENNPLFSEEMRLNMINIDHPGKIADFIASILNISKEEQQRTLEILDVRKRMEEVFVYIKKEKDLLEIQRKIQNDLNSRVEKNQREYFLREELRSIKEELGLTTDPKERDQRKFRALIDSFHFEGEVKEAVESELEKLSLTDPNSPEYSVGRTYLETVLSLPWHAPEKEEYDLKKAQKLLDEDHYGLENVKERIVEYLAVRKLRADTKGSIILLVGPPGVGKTSVGKSIARAIHKPFFRFSVGGISDEAEIKGHRRTYIGALPGKVLQGLKIVKTKAPVFMIDEVDKIGSGARGDPAGALLEVLDPEQNTTFRDHYLDLPFDLSHIVFVLTANSTDPIPRPLLDRAEIIRLSGYIDTEKVEIAKRHLVPKTLEKNGLKRACVSYRKEVLLHLVHSYARESGVRGLEKSLDKLHRKLATEIVLGKRSFDDKCLMDEALIGTFLGKPVFRDDMLKDANKVGTAVGLAWTGMGGDTLLVEAITIPGKASFKLTGQMGAVMKESASIALSWLRRYSAQQRIASPNWFEKRAIHLHIPEGATPKDGPSAGITMTTTLFSLLTQQKVKPRLAMTGELSLTGQVLPIGGLKEKTIAARRGGIKEIIMPKANVRDLDEIPEHVKKGMVFHLVESMEEVLSLAFPKGKRVRAGTAAQSASPETLTG.

Residues 1 to 24 (MAKNTDIEHDAHEPAGHGDVRESA) are compositionally biased toward basic and acidic residues. Residues 1–77 (MAKNTDIEHD…RAGEAEKGVP (77 aa)) are disordered. Positions 49 to 59 (QTDTESAQGAA) are enriched in polar residues. Residues 65-77 (EVQRAGEAEKGVP) are compositionally biased toward basic and acidic residues. The 194-residue stretch at 94 to 287 (VHLIPLTGRP…EVFVYIKKEK (194 aa)) folds into the Lon N-terminal domain. 440–447 (GPPGVGKT) contributes to the ATP binding site. The Lon proteolytic domain occupies 679-861 (ANKVGTAVGL…EEVLSLAFPK (183 aa)). Residues Ser-767 and Lys-810 contribute to the active site.

The protein belongs to the peptidase S16 family. In terms of assembly, homohexamer. Organized in a ring with a central cavity.

It localises to the cytoplasm. The enzyme catalyses Hydrolysis of proteins in presence of ATP.. Its function is as follows. ATP-dependent serine protease that mediates the selective degradation of mutant and abnormal proteins as well as certain short-lived regulatory proteins. Required for cellular homeostasis and for survival from DNA damage and developmental changes induced by stress. Degrades polypeptides processively to yield small peptide fragments that are 5 to 10 amino acids long. Binds to DNA in a double-stranded, site-specific manner. This chain is Lon protease, found in Treponema pallidum (strain Nichols).